Here is a 415-residue protein sequence, read N- to C-terminus: Mitogen-activated protein kinase mpkC (415 aa).

Positions 20–299 constitute a Protein kinase domain; that stretch reads YANLQPVGLG…AEQGLMHPWM (280 aa). Residues 26 to 34 and Lys49 each bind ATP; that span reads VGLGTAGVV. Asp141 acts as the Proton acceptor in catalysis. Thr171 bears the Phosphothreonine mark. A TXY motif is present at residues 171-173; sequence TGY. Residue Tyr173 is modified to Phosphotyrosine.

This sequence belongs to the protein kinase superfamily. Ser/Thr protein kinase family. MAP kinase subfamily. HOG1 sub-subfamily. The cofactor is Mg(2+). In terms of processing, dually phosphorylated on Thr-171 and Tyr-173, which activates the enzyme.

The enzyme catalyses L-seryl-[protein] + ATP = O-phospho-L-seryl-[protein] + ADP + H(+). It carries out the reaction L-threonyl-[protein] + ATP = O-phospho-L-threonyl-[protein] + ADP + H(+). Its activity is regulated as follows. Activated by tyrosine and threonine phosphorylation. Functionally, mitogen-activated protein kinase required for growth on media where sorbitol or mannitol is the sole carbon source. In Emericella nidulans (strain FGSC A4 / ATCC 38163 / CBS 112.46 / NRRL 194 / M139) (Aspergillus nidulans), this protein is Mitogen-activated protein kinase mpkC (mpkC).